The following is a 533-amino-acid chain: Acetone monooxygenase (methyl acetate-forming) (533 aa).

FAD-binding positions include 43–46 (TWYW), 55–56 (DS), and Y61. An NADP(+)-binding site is contributed by 53 to 55 (RFD). Residues 183-189 (NGATGIQ), 206-207 (RT), and W492 contribute to the NADP(+) site.

It belongs to the FAD-binding monooxygenase family. In terms of assembly, homotetramer. It depends on FAD as a cofactor.

It carries out the reaction acetone + NADPH + O2 + H(+) = methyl acetate + NADP(+) + H2O. Functionally, plays an important role in the metabolism of acetone derived from propane oxidation. Catalyzes the oxidation of acetone to methyl acetate. Exhibits high catalytic efficiency towards various linear and cyclic ketones, such as butanone, 2-pentanone, 2-heptanone, 2-octanone, 2-nonanone, 2-decanone, cyclobutanone, cyclopentanone and cyclohexanone. Elicits the highest catalytic efficiency towards butanone and cyclobutanone. Is highly specific for NADPH and cannot use NADH. The sequence is that of Acetone monooxygenase (methyl acetate-forming) from Gordonia sp. (strain TY-5).